The chain runs to 379 residues: tRNA-specific 2-thiouridylase MnmA (379 aa).

ATP-binding positions include 6–13 (AMSGGVDS) and Leu32. The active-site Nucleophile is the Cys101. A disulfide bridge connects residues Cys101 and Cys199. Gly125 lines the ATP pocket. The segment at 148–150 (KDQ) is interaction with tRNA. Cys199 functions as the Cysteine persulfide intermediate in the catalytic mechanism.

It belongs to the MnmA/TRMU family.

The protein resides in the cytoplasm. It catalyses the reaction S-sulfanyl-L-cysteinyl-[protein] + uridine(34) in tRNA + AH2 + ATP = 2-thiouridine(34) in tRNA + L-cysteinyl-[protein] + A + AMP + diphosphate + H(+). Catalyzes the 2-thiolation of uridine at the wobble position (U34) of tRNA, leading to the formation of s(2)U34. The protein is tRNA-specific 2-thiouridylase MnmA of Arthrobacter sp. (strain FB24).